A 308-amino-acid polypeptide reads, in one-letter code: F420-non-reducing hydrogenase subunit G (308 aa).

This sequence belongs to the [NiFe]/[NiFeSe] hydrogenase small subunit family. As to quaternary structure, the F420-non-reducing hydrogenase is composed of three subunits; MvhA, MvhD and MvhG. It forms a complex with the heterodisulfide reductase (hdr).

Its function is as follows. Part of a complex that provides reducing equivalents for heterodisulfide reductase. The polypeptide is F420-non-reducing hydrogenase subunit G (mvhG) (Methanothermobacter thermautotrophicus (strain ATCC 29096 / DSM 1053 / JCM 10044 / NBRC 100330 / Delta H) (Methanobacterium thermoautotrophicum)).